The following is a 31-amino-acid chain: Cyclotide mden-N (31 aa).

A cross-link (cyclopeptide (Gly-Asn)) is located at residues Gly-1–Asn-31. Cystine bridges form between Cys-5–Cys-21, Cys-9–Cys-23, and Cys-14–Cys-28.

This sequence belongs to the cyclotide family. Bracelet subfamily. In terms of processing, this is a cyclic peptide.

In terms of biological role, probably participates in a plant defense mechanism. The chain is Cyclotide mden-N from Melicytus dentatus (Tree violet).